We begin with the raw amino-acid sequence, 106 residues long: uncharacterized protein (106 aa).

2 helical membrane-spanning segments follow: residues 43–63 and 86–106; these read CSTI…LAIV and IPEL…FSLF.

It is found in the membrane. This is an uncharacterized protein from Saccharomyces cerevisiae (strain ATCC 204508 / S288c) (Baker's yeast).